Reading from the N-terminus, the 852-residue chain is Leucine--tRNA ligase (852 aa).

Positions 42 to 52 match the 'HIGH' region motif; it reads PYPSGKLHMGH. Positions 586-606 are disordered; it reads NKYVPADQVDPNDPKDPETGE. A 'KMSKS' region motif is present at residues 614-618; sequence KMSKS. Lysine 617 provides a ligand contact to ATP.

The protein belongs to the class-I aminoacyl-tRNA synthetase family.

The protein localises to the cytoplasm. The enzyme catalyses tRNA(Leu) + L-leucine + ATP = L-leucyl-tRNA(Leu) + AMP + diphosphate. This is Leucine--tRNA ligase from Picosynechococcus sp. (strain ATCC 27264 / PCC 7002 / PR-6) (Agmenellum quadruplicatum).